We begin with the raw amino-acid sequence, 521 residues long: METETPMDVETKSTTSNTNDNNNNTTIVKTTSNIIKEGDHVILDINNGEKFSVIKVKLGSKVKIGKKQILINSIIGESYYSSFQVSNEKNTLERITQKEIDDRLNNLVELNQNDADNRNLDQNNTAQKLTQEDINEMKQKGTDSNTIIKTIVENSESFKTKTSFSQIKYLKKKIKKYSTIVKIIKPTLKSLTEAYYKKDSRKICGLRFDSFGQLLTLGNIRANSQVLVVETCMGLVTGSIAERMNGQGTILSAYIGKGPSLSIVNNFGFNTDVLNTIYPFNLNITSVLNKGEDISKLPPTASSGIYDKQVKEKEKEKEKDENVKDEKESGEEAKTIINQRNDTSNENIVKLLKDGGVWSLVIVTKYSPLNILLSCWPYLNSSGSFVIYSQFPQPLMEVHQFLHKNQMAVNQQISEIWMREHQVLPKRTHPMMGMDGASGFILYGTKVTKPIQKSTTTTTTTTTTTTNNSINPTKTTASLDIENKVIDATTSSSSSSTAAATTTEEDKEDSESALKKRKIDE.

Disordered stretches follow at residues 1 to 24, 305 to 336, and 452 to 521; these read METE…NNNN, IYDK…AKTI, and QKST…KIDE. Residues 12 to 24 are compositionally biased toward low complexity; that stretch reads KSTTSNTNDNNNN. Over residues 308 to 334 the composition is skewed to basic and acidic residues; that stretch reads KQVKEKEKEKEKDENVKDEKESGEEAK. 2 stretches are compositionally biased toward low complexity: residues 452–476 and 487–502; these read QKST…TKTT and DATT…AATT. A compositionally biased stretch (basic and acidic residues) spans 510–521; the sequence is SESALKKRKIDE.

Belongs to the TRM6/GCD10 family. Heterotetramer; composed of two copies of trmt6 and two copies of trmt61a.

It is found in the nucleus. Functionally, substrate-binding subunit of tRNA (adenine-N(1)-)-methyltransferase, which catalyzes the formation of N(1)-methyladenine at position 58 (m1A58) in initiator methionyl-tRNA. This Dictyostelium discoideum (Social amoeba) protein is tRNA (adenine(58)-N(1))-methyltransferase non-catalytic subunit trm6 (trmt6).